Here is a 244-residue protein sequence, read N- to C-terminus: Precorrin-6A reductase (244 aa).

Belongs to the precorrin-6x reductase family.

It catalyses the reaction precorrin-6B + NADP(+) = precorrin-6A + NADPH + 2 H(+). The protein operates within cofactor biosynthesis; adenosylcobalamin biosynthesis; cob(II)yrinate a,c-diamide from precorrin-2 (aerobic route): step 6/10. In terms of biological role, catalyzes the reduction of the macrocycle of precorrin-6X into precorrin-6Y. This chain is Precorrin-6A reductase (cobK), found in Mycobacterium tuberculosis (strain CDC 1551 / Oshkosh).